A 721-amino-acid polypeptide reads, in one-letter code: Protein mu-NS (721 aa).

The segment at 1 to 13 is interaction with sigma-NS; that stretch reads MASFKGFSANTVP. An RNA-binding region spans residues 1 to 38; that stretch reads MASFKGFSANTVPVSKTRKDTSSLTATPGLRAPSMSSP. The tract at residues 14–40 is interaction with mu-2; the sequence is VSKTRKDTSSLTATPGLRAPSMSSPVD. A disordered region spans residues 17 to 37; the sequence is TRKDTSSLTATPGLRAPSMSS. Positions 471–721 are involved in the formation of factory-like inclusions; the sequence is QSDTVDGIKL…IDFSVPADEL (251 aa). Coiled coils occupy residues 523–556 and 632–686; these read LLSQ…ADVK and KQAH…NQRQ.

It belongs to the orthoreovirus mu-NS protein family. In terms of assembly, interacts with mu-2. Interacts with sigma-NS; in viral factories. Interacts with the inner capsid proteins lambda-1 and sigma-2, and outer capsid protein lambda-2; in viral factories. The N-terminus is blocked.

Its subcellular location is the host cytoplasm. Non-structural protein implicated with protein sigma-NS in forming the matrix of viral factories, which are large inclusions in the host cytoplasm where replication intermediates are assembled and viral RNA replication takes place. Together with mu-2, recruits the other core proteins to these factories. The polypeptide is Protein mu-NS (M3) (Mammalia (T2J)).